The sequence spans 512 residues: Catalase (512 aa).

Residues H60 and N133 contribute to the active site. Residue Y344 coordinates heme. S363 is modified (phosphoserine). Over residues 488-505 (EVKKMEEKAPKPINKGEP) the composition is skewed to basic and acidic residues. Positions 488–512 (EVKKMEEKAPKPINKGEPHMFQGSS) are disordered.

This sequence belongs to the catalase family. It depends on heme as a cofactor.

Its subcellular location is the peroxisome matrix. The enzyme catalyses 2 H2O2 = O2 + 2 H2O. Functionally, catalyzes the degradation of hydrogen peroxide (H(2)O(2)) generated by peroxisomal oxidases to water and oxygen, thereby protecting cells from the toxic effects of hydrogen peroxide. This chain is Catalase (cta1), found in Schizosaccharomyces pombe (strain 972 / ATCC 24843) (Fission yeast).